Consider the following 131-residue polypeptide: Fumarate reductase subunit C (131 aa).

Helical transmembrane passes span 30–50 (EGTAVPTVWFSIELIFGLFAL), 57–77 (WMGFVGFLQNPVVVILNLITL), and 109–129 (IIKGLWVVTAVVTVVILYVAL).

The protein belongs to the FrdC family. Part of an enzyme complex containing four subunits: a flavoprotein (FrdA), an iron-sulfur protein (FrdB), and two hydrophobic anchor proteins (FrdC and FrdD).

The protein localises to the cell inner membrane. Two distinct, membrane-bound, FAD-containing enzymes are responsible for the catalysis of fumarate and succinate interconversion; fumarate reductase is used in anaerobic growth, and succinate dehydrogenase is used in aerobic growth. Anchors the catalytic components of the fumarate reductase complex to the cell inner membrane, binds quinones. The polypeptide is Fumarate reductase subunit C (Salmonella dublin (strain CT_02021853)).